The chain runs to 1037 residues: Glycine dehydrogenase (decarboxylating) A, mitochondrial (1037 aa).

Residues methionine 1–threonine 66 constitute a mitochondrion transit peptide. Position 773 is an N6-(pyridoxal phosphate)lysine (lysine 773).

It belongs to the GcvP family. Homodimer. The glycine cleavage system is composed of four proteins: P, T, L and H. Pyridoxal 5'-phosphate is required as a cofactor. In terms of tissue distribution, expressed in leaves, stems and roots.

The protein resides in the mitochondrion. The enzyme catalyses N(6)-[(R)-lipoyl]-L-lysyl-[glycine-cleavage complex H protein] + glycine + H(+) = N(6)-[(R)-S(8)-aminomethyldihydrolipoyl]-L-lysyl-[glycine-cleavage complex H protein] + CO2. The glycine cleavage system catalyzes the degradation of glycine. The P protein binds the alpha-amino group of glycine through its pyridoxal phosphate cofactor; CO(2) is released and the remaining methylamine moiety is then transferred to the lipoamide cofactor of the H protein. The chain is Glycine dehydrogenase (decarboxylating) A, mitochondrial (GDCSPA) from Flaveria pringlei.